The following is a 109-amino-acid chain: Nucleoid-associated protein Swoo_1794 (109 aa).

A disordered region spans residues 88-109; sequence QKDKMAEVTGGMQLPPGMKMPF.

Belongs to the YbaB/EbfC family. As to quaternary structure, homodimer.

The protein localises to the cytoplasm. It is found in the nucleoid. Functionally, binds to DNA and alters its conformation. May be involved in regulation of gene expression, nucleoid organization and DNA protection. In Shewanella woodyi (strain ATCC 51908 / MS32), this protein is Nucleoid-associated protein Swoo_1794.